The chain runs to 182 residues: Putative manganese efflux pump MntP (182 aa).

The next 6 membrane-spanning stretches (helical) occupy residues 6-26 (LIPLIIMAFALGMDAFSVSLG), 37-57 (ILYIGMTIGIFHIIMPFIGMV), 72-92 (FAGAILLIGLGFYIVYSSILE), 101-121 (IGISLFVFAFGVSIDSFSVGL), 131-151 (IITILLFGLISMLLAWMGLLL), and 162-182 (YGEIVGGIILVGFGLYLLFPI).

The protein belongs to the MntP (TC 9.B.29) family.

It is found in the cell membrane. Probably functions as a manganese efflux pump. This is Putative manganese efflux pump MntP from Bacillus mycoides (strain KBAB4) (Bacillus weihenstephanensis).